Consider the following 459-residue polypeptide: Zeatin O-glucosyltransferase (459 aa).

The Proton acceptor role is filled by histidine 26. Histidine 26 contributes to the an anthocyanidin binding site. Aspartate 125 serves as the catalytic Charge relay. UDP-alpha-D-glucose contacts are provided by serine 148, alanine 335, glutamine 337, histidine 352, tryptophan 355, asparagine 356, serine 357, glutamate 360, aspartate 376, and glutamine 377.

The protein belongs to the UDP-glycosyltransferase family.

It carries out the reaction trans-zeatin + UDP-alpha-D-glucose = O-beta-D-glucosyl-trans-zeatin + UDP + H(+). In terms of biological role, may regulate active versus storage forms of cytokinins, and could have an impact on seed growth. Can also use UDP-xylose to catalyze the formation of O-xylosylzeatin but at much lower affinity. In Phaseolus lunatus (Lima bean), this protein is Zeatin O-glucosyltransferase.